The chain runs to 449 residues: Chromosomal replication initiator protein DnaA (449 aa).

The segment at 1 to 72 (MPNLEELWAY…VEGVYEFAQL (72 aa)) is domain I, interacts with DnaA modulators. Residues 72 to 109 (LEVDPVIMTKDELQPAPATDQRPAVEEDDQNLTFKAKT) form a domain II region. A domain III, AAA+ region region spans residues 110–326 (HLNPKYTFDR…GALVRVQAFS (217 aa)). Gly-154, Gly-156, Lys-157, and Thr-158 together coordinate ATP. Residues 327 to 449 (TMKNEDITTS…ELRNILKNRG (123 aa)) are domain IV, binds dsDNA.

Belongs to the DnaA family. Oligomerizes as a right-handed, spiral filament on DNA at oriC.

It localises to the cytoplasm. In terms of biological role, plays an essential role in the initiation and regulation of chromosomal replication. ATP-DnaA binds to the origin of replication (oriC) to initiate formation of the DNA replication initiation complex once per cell cycle. Binds the DnaA box (a 9 base pair repeat at the origin) and separates the double-stranded (ds)DNA. Forms a right-handed helical filament on oriC DNA; dsDNA binds to the exterior of the filament while single-stranded (ss)DNA is stabiized in the filament's interior. The ATP-DnaA-oriC complex binds and stabilizes one strand of the AT-rich DNA unwinding element (DUE), permitting loading of DNA polymerase. After initiation quickly degrades to an ADP-DnaA complex that is not apt for DNA replication. Binds acidic phospholipids. The protein is Chromosomal replication initiator protein DnaA of Lacticaseibacillus casei (strain BL23) (Lactobacillus casei).